A 452-amino-acid polypeptide reads, in one-letter code: Probable glycine dehydrogenase (decarboxylating) subunit 1 (452 aa).

Belongs to the GcvP family. N-terminal subunit subfamily. As to quaternary structure, the glycine cleavage system is composed of four proteins: P, T, L and H. In this organism, the P 'protein' is a heterodimer of two subunits.

It carries out the reaction N(6)-[(R)-lipoyl]-L-lysyl-[glycine-cleavage complex H protein] + glycine + H(+) = N(6)-[(R)-S(8)-aminomethyldihydrolipoyl]-L-lysyl-[glycine-cleavage complex H protein] + CO2. Functionally, the glycine cleavage system catalyzes the degradation of glycine. The P protein binds the alpha-amino group of glycine through its pyridoxal phosphate cofactor; CO(2) is released and the remaining methylamine moiety is then transferred to the lipoamide cofactor of the H protein. The sequence is that of Probable glycine dehydrogenase (decarboxylating) subunit 1 from Alcanivorax borkumensis (strain ATCC 700651 / DSM 11573 / NCIMB 13689 / SK2).